The primary structure comprises 276 residues: Undecaprenyl-diphosphatase (276 aa).

The next 7 helical transmembrane spans lie at 46–66 (AGAS…LIYF), 94–114 (LMGI…VKAI), 122–142 (LWVV…AERV), 152–172 (LGIG…IPGV), 196–216 (SFLL…IAEF), 226–246 (LGTL…IRFL), and 253–273 (VFIV…ALGF).

This sequence belongs to the UppP family.

Its subcellular location is the cell inner membrane. It catalyses the reaction di-trans,octa-cis-undecaprenyl diphosphate + H2O = di-trans,octa-cis-undecaprenyl phosphate + phosphate + H(+). In terms of biological role, catalyzes the dephosphorylation of undecaprenyl diphosphate (UPP). Confers resistance to bacitracin. This chain is Undecaprenyl-diphosphatase, found in Synechococcus sp. (strain JA-3-3Ab) (Cyanobacteria bacterium Yellowstone A-Prime).